Reading from the N-terminus, the 358-residue chain is Methylthioribose-1-phosphate isomerase (358 aa).

Residues 54-56 (RGA), Arg-96, and Gln-205 each bind substrate. Catalysis depends on Asp-246, which acts as the Proton donor. 256–257 (AK) contributes to the substrate binding site.

It belongs to the eIF-2B alpha/beta/delta subunits family. MtnA subfamily.

The catalysed reaction is 5-(methylsulfanyl)-alpha-D-ribose 1-phosphate = 5-(methylsulfanyl)-D-ribulose 1-phosphate. It functions in the pathway amino-acid biosynthesis; L-methionine biosynthesis via salvage pathway; L-methionine from S-methyl-5-thio-alpha-D-ribose 1-phosphate: step 1/6. In terms of biological role, catalyzes the interconversion of methylthioribose-1-phosphate (MTR-1-P) into methylthioribulose-1-phosphate (MTRu-1-P). The polypeptide is Methylthioribose-1-phosphate isomerase (Pseudomonas entomophila (strain L48)).